The sequence spans 411 residues: Na(+)-translocating NADH-quinone reductase subunit F (411 aa).

The chain crosses the membrane as a helical span at residues 6–26 (AIGGVAMFTLIIMSFVAIILA). In terms of domain architecture, 2Fe-2S ferredoxin-type spans 35-129 (GDVTIHINDN…DMKIEIDPEF (95 aa)). Residues cysteine 72, cysteine 78, cysteine 81, and cysteine 113 each coordinate [2Fe-2S] cluster. The 142-residue stretch at 132 to 273 (VQKWECEVIS…SGPYGEFFAK (142 aa)) folds into the FAD-binding FR-type domain.

Belongs to the NqrF family. Composed of six subunits; NqrA, NqrB, NqrC, NqrD, NqrE and NqrF. Requires [2Fe-2S] cluster as cofactor. The cofactor is FAD.

It localises to the cell inner membrane. The catalysed reaction is a ubiquinone + n Na(+)(in) + NADH + H(+) = a ubiquinol + n Na(+)(out) + NAD(+). NQR complex catalyzes the reduction of ubiquinone-1 to ubiquinol by two successive reactions, coupled with the transport of Na(+) ions from the cytoplasm to the periplasm. The first step is catalyzed by NqrF, which accepts electrons from NADH and reduces ubiquinone-1 to ubisemiquinone by a one-electron transfer pathway. In Psychrobacter arcticus (strain DSM 17307 / VKM B-2377 / 273-4), this protein is Na(+)-translocating NADH-quinone reductase subunit F.